The following is a 44-amino-acid chain: Thaumatin-like protein 5 (44 aa).

It belongs to the thaumatin family.

This Glebionis coronaria (Crown daisy) protein is Thaumatin-like protein 5.